A 1171-amino-acid polypeptide reads, in one-letter code: Phytochrome B (1171 aa).

A compositionally biased stretch (low complexity) spans Met1 to Ala19. Positions Met1–Ala53 are disordered. A compositionally biased stretch (gly residues) spans Ala38–Ala52. The region spanning Asp259–Leu442 is the GAF domain. Cys364 is a phytochromobilin binding site. 2 consecutive PAS domains span residues Val661–Asp732 and Asp795–Leu866. In terms of domain architecture, Histidine kinase spans Tyr943–Gln1161.

Belongs to the phytochrome family. In terms of assembly, homodimer. Contains one covalently linked phytochromobilin chromophore.

Its function is as follows. Regulatory photoreceptor which exists in two forms that are reversibly interconvertible by light: the Pr form that absorbs maximally in the red region of the spectrum and the Pfr form that absorbs maximally in the far-red region. Photoconversion of Pr to Pfr induces an array of morphogenic responses, whereas reconversion of Pfr to Pr cancels the induction of those responses. Pfr controls the expression of a number of nuclear genes including those encoding the small subunit of ribulose-bisphosphate carboxylase, chlorophyll A/B binding protein, protochlorophyllide reductase, rRNA, etc. It also controls the expression of its own gene(s) in a negative feedback fashion. The protein is Phytochrome B (PHYB) of Oryza sativa subsp. indica (Rice).